The primary structure comprises 329 residues: Beta-ketoacyl-[acyl-carrier-protein] synthase III (329 aa).

Residues C123 and H256 contribute to the active site. Residues 257 to 261 (QANIR) form an ACP-binding region. The active site involves N286.

This sequence belongs to the thiolase-like superfamily. FabH family. In terms of assembly, homodimer.

The protein localises to the cytoplasm. It catalyses the reaction malonyl-[ACP] + acetyl-CoA + H(+) = 3-oxobutanoyl-[ACP] + CO2 + CoA. It functions in the pathway lipid metabolism; fatty acid biosynthesis. Catalyzes the condensation reaction of fatty acid synthesis by the addition to an acyl acceptor of two carbons from malonyl-ACP. Catalyzes the first condensation reaction which initiates fatty acid synthesis and may therefore play a role in governing the total rate of fatty acid production. Possesses both acetoacetyl-ACP synthase and acetyl transacylase activities. Its substrate specificity determines the biosynthesis of branched-chain and/or straight-chain of fatty acids. The polypeptide is Beta-ketoacyl-[acyl-carrier-protein] synthase III (Burkholderia pseudomallei (strain 1710b)).